The primary structure comprises 185 residues: MISSNDFRPGVSIVLDGSVWRVIDFLHVKPGKGSAFVRTTLKNVQSGKVLEKTFRAGETVPQATLEKITMQHTYKEGDEFVFMDMESYEEGRLSAAQIGDRVKYLKEGMEVNVIRWGEQVLEVELANSVVLEVIQTDPGVKGDTATGGTKPAIVETGATVMVPLFISQGERIKIDTRDDKYLGRE.

The protein belongs to the elongation factor P family.

Its subcellular location is the cytoplasm. It participates in protein biosynthesis; polypeptide chain elongation. Involved in peptide bond synthesis. Stimulates efficient translation and peptide-bond synthesis on native or reconstituted 70S ribosomes in vitro. Probably functions indirectly by altering the affinity of the ribosome for aminoacyl-tRNA, thus increasing their reactivity as acceptors for peptidyl transferase. This Nostoc sp. (strain PCC 7120 / SAG 25.82 / UTEX 2576) protein is Elongation factor P (efp).